A 756-amino-acid chain; its full sequence is DNA mismatch repair protein Mlh1 (756 aa).

Serine 2 carries the N-acetylserine modification. The residue at position 33 (lysine 33) is an N6-acetyllysine. ATP contacts are provided by residues asparagine 38, aspartate 63, 82-84 (TSK), and 100-104 (RGEAL). 2 positions are modified to N6-acetyllysine: lysine 241 and lysine 361. 2 disordered regions span residues 355–378 (PSGE…SDKV) and 400–491 (LSKP…KEMT). Residues 362–375 (STTSLTSSSTSGSS) are compositionally biased toward low complexity. The residue at position 377 (lysine 377) is an N6-acetyllysine. The interaction with EXO1 stretch occupies residues 410 to 650 (AIVTEDKTDI…LLIDNYVPPL (241 aa)). The segment covering 443 to 457 (KNQSLEGDTTKGTSE) has biased composition (polar residues). Residues 471 to 474 (KRHR) carry the Nuclear localization signal motif. Phosphoserine is present on serine 477.

This sequence belongs to the DNA mismatch repair MutL/HexB family. As to quaternary structure, component of the DNA mismatch repair (MMR) complex composed at least of MSH2, MSH3, MSH6, PMS1 and MLH1. Heterodimer of MLH1 and PMS2 (MutL alpha), MLH1 and PMS1 (MutL beta) or MLH1 and MLH3 (MutL gamma). Forms a ternary complex with MutS alpha (MSH2-MSH6) or MutS beta (MSH2-MSH3). Part of the BRCA1-associated genome surveillance complex (BASC), which contains BRCA1, MSH2, MSH6, MLH1, ATM, BLM, PMS2 and the RAD50-MRE11-NBS1 protein complex. This association could be a dynamic process changing throughout the cell cycle and within subnuclear domains. Interacts with MCM9; the interaction recruits MLH1 to chromatin. Interacts with MCM8. Interacts with PMS2; this interaction promotes MLH1 stability. Interacts with MBD4. Interacts with EXO1. Interacts with MTMR15/FAN1. In terms of processing, acetylated. Deacetylated by HDAC6 which prevents the MutL alpha complex, formed by the MLH1-PMS2 heterodimer, from being recruited to the MutS alpha complex, formed by the MSH2-MSH6 heterodimer, leading to tolerance of DNA damage. Ubiquitinated by UBR4; leading to proteasomal degradation. This ubiquitination is counteracted by the deubiquitinase USP5. In terms of tissue distribution, colon, lymphocytes, breast, lung, spleen, testis, prostate, thyroid, gall bladder and heart.

It localises to the nucleus. The protein resides in the chromosome. Heterodimerizes with PMS2 to form MutL alpha, a component of the post-replicative DNA mismatch repair system (MMR). DNA repair is initiated by MutS alpha (MSH2-MSH6) or MutS beta (MSH2-MSH3) binding to a dsDNA mismatch, then MutL alpha is recruited to the heteroduplex. Assembly of the MutL-MutS-heteroduplex ternary complex in presence of RFC and PCNA is sufficient to activate endonuclease activity of PMS2. It introduces single-strand breaks near the mismatch and thus generates new entry points for the exonuclease EXO1 to degrade the strand containing the mismatch. DNA methylation would prevent cleavage and therefore assure that only the newly mutated DNA strand is going to be corrected. MutL alpha (MLH1-PMS2) interacts physically with the clamp loader subunits of DNA polymerase III, suggesting that it may play a role to recruit the DNA polymerase III to the site of the MMR. Also implicated in DNA damage signaling, a process which induces cell cycle arrest and can lead to apoptosis in case of major DNA damages. Heterodimerizes with MLH3 to form MutL gamma which plays a role in meiosis. The chain is DNA mismatch repair protein Mlh1 (MLH1) from Homo sapiens (Human).